We begin with the raw amino-acid sequence, 1827 residues long: Laminin subunit beta-4 (1827 aa).

Residues 1–21 (MLLRLELSALLLLLIAAPVRL) form the signal peptide. The Laminin N-terminal domain occupies 26-266 (VGNSCYPNLG…ALYEMVVRGS (241 aa)). N-linked (GlcNAc...) asparagine glycosylation is present at Asn-231. Cystine bridges form between Cys-267–Cys-276, Cys-269–Cys-297, Cys-299–Cys-308, Cys-311–Cys-331, Cys-334–Cys-343, Cys-336–Cys-361, Cys-364–Cys-373, Cys-376–Cys-394, Cys-397–Cys-410, Cys-399–Cys-417, Cys-419–Cys-428, Cys-431–Cys-446, Cys-449–Cys-463, Cys-451–Cys-470, Cys-472–Cys-481, Cys-484–Cys-498, Cys-501–Cys-513, Cys-503–Cys-520, and Cys-522–Cys-531. Laminin EGF-like domains follow at residues 267-333 (CFCN…VCKR), 334-396 (CNCH…ACIP), 397-448 (CDCD…GCQL), and 449-500 (CRCN…GCIP). Residues 501 to 544 (CDCDIGGALKTECSSVDGQCKCRPNMVGQKCNDPAPGYFLAPLD) form the Laminin EGF-like 5; truncated domain. One can recognise a Laminin IV type B domain in the interval 540–847 (LAPLDFYIYE…LIGSMSAFIH (308 aa)). 32 cysteine pairs are disulfide-bonded: Cys-853–Cys-865, Cys-855–Cys-872, Cys-874–Cys-883, Cys-886–Cys-898, Cys-901–Cys-913, Cys-903–Cys-920, Cys-922–Cys-931, Cys-934–Cys-944, Cys-947–Cys-956, Cys-949–Cys-963, Cys-966–Cys-975, Cys-978–Cys-992, Cys-995–Cys-1011, Cys-997–Cys-1022, Cys-1024–Cys-1033, Cys-1036–Cys-1051, Cys-1054–Cys-1068, Cys-1056–Cys-1075, Cys-1078–Cys-1087, Cys-1090–Cys-1103, Cys-1106–Cys-1126, Cys-1108–Cys-1133, Cys-1135–Cys-1144, Cys-1147–Cys-1160, Cys-1163–Cys-1175, Cys-1165–Cys-1182, Cys-1184–Cys-1193, Cys-1196–Cys-1208, Cys-1211–Cys-1223, Cys-1213–Cys-1230, Cys-1232–Cys-1241, and Cys-1244–Cys-1255. 8 consecutive Laminin EGF-like domains span residues 853-900 (CNCH…GCSP), 901-946 (CDCD…LCRR), 947-994 (CQCN…PCEP), 995-1053 (CLCP…RCKE), 1054-1105 (CCCN…DCKE), 1106-1162 (CSCD…GCQP), 1163-1210 (CNCN…QCMF), and 1211-1257 (CDCN…ACEP). Asn-1001 carries N-linked (GlcNAc...) asparagine glycosylation. Residues 1258–1449 (CHACNHLWEK…LSAANINEEV (192 aa)) are domain II. 2 coiled-coil regions span residues 1294–1335 (ELQH…EIID) and 1385–1449 (NKIK…NEEV). Asn-1329 carries N-linked (GlcNAc...) asparagine glycosylation. The tract at residues 1450 to 1476 (CGAPGDAECEKAKCGGALCGKCGGPDC) is domain alpha. A domain I region spans residues 1477 to 1827 (TGSLPISLNA…KVQRYNLCSP (351 aa)). Residues Asn-1485, Asn-1496, Asn-1513, Asn-1533, Asn-1599, Asn-1629, Asn-1644, Asn-1672, Asn-1686, Asn-1702, Asn-1726, Asn-1745, Asn-1750, and Asn-1761 are each glycosylated (N-linked (GlcNAc...) asparagine). Coiled coils occupy residues 1485–1554 (NASK…EKVK) and 1584–1820 (DEIK…DKVQ).

Laminin is a complex glycoprotein, consisting of three different polypeptide chains (alpha, beta, gamma), which are bound to each other by disulfide bonds into a cross-shaped molecule comprising one long and three short arms with globules at each end.

It localises to the secreted. It is found in the extracellular space. The protein localises to the extracellular matrix. Its subcellular location is the basement membrane. Functionally, binding to cells via a high affinity receptor, laminin is thought to mediate the attachment, migration and organization of cells into tissues during embryonic development by interacting with other extracellular matrix components. Positively regulates apical-basal distribution of Muller glia cells in the retina. In Danio rerio (Zebrafish), this protein is Laminin subunit beta-4 (lamb4).